A 227-amino-acid polypeptide reads, in one-letter code: Protein GrpE (227 aa).

The segment covering 1–18 (MTQGNQKTEGNPPEQVTV) has biased composition (polar residues). 2 disordered regions span residues 1 to 57 (MTQG…GAAT) and 193 to 227 (TEEG…ASGD). Basic and acidic residues predominate over residues 19–35 (TDKRRIDPETGEVRHVP). Low complexity-rich tracts occupy residues 41-50 (GGTAPQAATA) and 199-213 (EAAA…AAET).

It belongs to the GrpE family. As to quaternary structure, homodimer.

It localises to the cytoplasm. Participates actively in the response to hyperosmotic and heat shock by preventing the aggregation of stress-denatured proteins, in association with DnaK and GrpE. It is the nucleotide exchange factor for DnaK and may function as a thermosensor. Unfolded proteins bind initially to DnaJ; upon interaction with the DnaJ-bound protein, DnaK hydrolyzes its bound ATP, resulting in the formation of a stable complex. GrpE releases ADP from DnaK; ATP binding to DnaK triggers the release of the substrate protein, thus completing the reaction cycle. Several rounds of ATP-dependent interactions between DnaJ, DnaK and GrpE are required for fully efficient folding. The polypeptide is Protein GrpE (Mycolicibacterium paratuberculosis (strain ATCC BAA-968 / K-10) (Mycobacterium paratuberculosis)).